Here is a 171-residue protein sequence, read N- to C-terminus: MRIGLYPGTFDPVTLGHLDIIRRASTLVDRLVIGVAINRDKGPLFSLEERVAMLEAECAAVSAETGTEIVAHPFENLLIDCARDVGASMIIRGLRAVADFEYEFQMVGMNRRLDDSIETVFLMAEAEHQAIASKLVKEIARLGGDVTPFVTSQVRAALVDRFGPPQMNAAQ.

Residue Thr9 coordinates substrate. Residues 9–10 and His17 contribute to the ATP site; that span reads TF. Lys41, Leu78, and Arg92 together coordinate substrate. ATP contacts are provided by residues 93-95, Glu103, and 128-134; these read GLR and HQAIASK.

This sequence belongs to the bacterial CoaD family. In terms of assembly, homohexamer. Requires Mg(2+) as cofactor.

It is found in the cytoplasm. The catalysed reaction is (R)-4'-phosphopantetheine + ATP + H(+) = 3'-dephospho-CoA + diphosphate. Its pathway is cofactor biosynthesis; coenzyme A biosynthesis; CoA from (R)-pantothenate: step 4/5. In terms of biological role, reversibly transfers an adenylyl group from ATP to 4'-phosphopantetheine, yielding dephospho-CoA (dPCoA) and pyrophosphate. This chain is Phosphopantetheine adenylyltransferase, found in Dinoroseobacter shibae (strain DSM 16493 / NCIMB 14021 / DFL 12).